Here is a 37-residue protein sequence, read N- to C-terminus: Neuropeptide Y2-like conopeptide (37 aa).

Residue tyrosine 37 is modified to Tyrosine amide.

Belongs to the NPY family. In terms of tissue distribution, expressed by the venom duct.

It is found in the secreted. Functionally, causes hyperactivity such as jumping, rapid circling and tail flicking, after intraventicular injection into mouse brain. The chain is Neuropeptide Y2-like conopeptide from Conus betulinus (Beech cone).